The primary structure comprises 242 residues: Ribosomal RNA small subunit methyltransferase G (242 aa).

S-adenosyl-L-methionine contacts are provided by residues Gly-78, Phe-83, Ala-129–Glu-130, and Arg-148.

The protein belongs to the methyltransferase superfamily. RNA methyltransferase RsmG family.

The protein resides in the cytoplasm. Functionally, specifically methylates the N7 position of a guanine in 16S rRNA. The protein is Ribosomal RNA small subunit methyltransferase G of Lachnoclostridium phytofermentans (strain ATCC 700394 / DSM 18823 / ISDg) (Clostridium phytofermentans).